A 137-amino-acid chain; its full sequence is MPEYEGNCLCKAIHLKAIIEEPKLSCCHCETCRIWCSSPFMAFSCTQKPSVSENENVGKYASSSFAERIFCKNCGTTLYFAYTNGKNPYFINAWLFKGIENITFDAQVCIDDKPDCYDFANKTSMFTVDEVMKSIVK.

In terms of domain architecture, CENP-V/GFA spans 4-118 (YEGNCLCKAI…CIDDKPDCYD (115 aa)). Residues C8, C10, C27, C29, C32, C71, and C74 each contribute to the Zn(2+) site.

Belongs to the Gfa family. Zn(2+) serves as cofactor.

It is found in the cytoplasm. It localises to the nucleus. This is an uncharacterized protein from Schizosaccharomyces pombe (strain 972 / ATCC 24843) (Fission yeast).